A 163-amino-acid chain; its full sequence is Anaerobic nitrite reductase HB1 (163 aa).

The 150-residue stretch at 8–157 (VFTEEQEALV…LVAAIKIEMK (150 aa)) folds into the Globin domain. The Homodimerization motif lies at 41–45 (EIAPS). Heme b is bound by residues serine 51, lysine 65, histidine 69, lysine 99, threonine 103, and histidine 104. The short motif at 111-123 (DEHFEVTKFALLE) is the Homodimerization element.

The protein belongs to the plant globin family. In terms of assembly, homodimer. The cofactor is heme b.

Its subcellular location is the cytoplasm. It is found in the nucleus. The enzyme catalyses Fe(III)-heme b-[protein] + nitric oxide + H2O = Fe(II)-heme b-[protein] + nitrite + 2 H(+). In terms of biological role, phytoglobin that reduces nitrite to nitric oxide (NO) under anoxic conditions (e.g. during flooding or in waterlogged soil). May not function as an oxygen storage or transport protein. Has an unusually high affinity for O(2) through an hexacoordinate heme iron because of a very low dissociation constant. This Gossypium hirsutum (Upland cotton) protein is Anaerobic nitrite reductase HB1.